The following is a 208-amino-acid chain: Riboflavin synthase (208 aa).

Lumazine-binding repeat units follow at residues 1–97 (MFTG…MGGH) and 98–195 (FVQG…EKLV). 2,4-dihydroxypteridine is bound by residues 4 to 6 (GLV), 48 to 50 (CLT), 62 to 67 (GIAPES), 101 to 103 (GHV), K137, 146 to 148 (SLT), and 160 to 165 (MMISYT).

In terms of assembly, homotrimer.

The catalysed reaction is 2 6,7-dimethyl-8-(1-D-ribityl)lumazine + H(+) = 5-amino-6-(D-ribitylamino)uracil + riboflavin. It functions in the pathway cofactor biosynthesis; riboflavin biosynthesis; riboflavin from 2-hydroxy-3-oxobutyl phosphate and 5-amino-6-(D-ribitylamino)uracil: step 2/2. Its function is as follows. Catalyzes the dismutation of two molecules of 6,7-dimethyl-8-ribityllumazine, resulting in the formation of riboflavin and 5-amino-6-(D-ribitylamino)uracil. The protein is Riboflavin synthase (rib5) of Schizosaccharomyces pombe (strain 972 / ATCC 24843) (Fission yeast).